The following is a 509-amino-acid chain: Bifunctional purine biosynthesis protein PurH (509 aa).

The region spanning 1 to 144 (MKRALISVSD…KNYAAVTVVV (144 aa)) is the MGS-like domain.

The protein belongs to the PurH family.

The catalysed reaction is (6R)-10-formyltetrahydrofolate + 5-amino-1-(5-phospho-beta-D-ribosyl)imidazole-4-carboxamide = 5-formamido-1-(5-phospho-D-ribosyl)imidazole-4-carboxamide + (6S)-5,6,7,8-tetrahydrofolate. It catalyses the reaction IMP + H2O = 5-formamido-1-(5-phospho-D-ribosyl)imidazole-4-carboxamide. It functions in the pathway purine metabolism; IMP biosynthesis via de novo pathway; 5-formamido-1-(5-phospho-D-ribosyl)imidazole-4-carboxamide from 5-amino-1-(5-phospho-D-ribosyl)imidazole-4-carboxamide (10-formyl THF route): step 1/1. It participates in purine metabolism; IMP biosynthesis via de novo pathway; IMP from 5-formamido-1-(5-phospho-D-ribosyl)imidazole-4-carboxamide: step 1/1. The chain is Bifunctional purine biosynthesis protein PurH from Listeria monocytogenes serotype 4b (strain CLIP80459).